We begin with the raw amino-acid sequence, 1048 residues long: Self-sufficient cytochrome P450 monooxygenase CYP505E4 (1048 aa).

Cys-405 is a heme binding site. The Flavodoxin-like domain maps to 499 to 640 (VSFFYGSNSG…DLEVWEETNL (142 aa)). Residues 505–509 (SNSGT) and 584–616 (VFGC…TRLA) each bind FMN. In terms of domain architecture, FAD-binding FR-type spans 678 to 906 (RDLIEAKVTA…RPAKDAFHLP (229 aa)).

This sequence in the N-terminal section; belongs to the cytochrome P450 family. FAD serves as cofactor. It depends on FMN as a cofactor. The cofactor is heme.

The catalysed reaction is 2 oxidized [cytochrome P450] + NADPH = 2 reduced [cytochrome P450] + NADP(+) + H(+). It carries out the reaction an organic molecule + reduced [NADPH--hemoprotein reductase] + O2 = an alcohol + oxidized [NADPH--hemoprotein reductase] + H2O + H(+). It catalyses the reaction dodecanoate + reduced [NADPH--hemoprotein reductase] + O2 = 5-hydroxydodecanoate + oxidized [NADPH--hemoprotein reductase] + H2O + H(+). The enzyme catalyses tetradecanoate + reduced [NADPH--hemoprotein reductase] + O2 = 7-hydroxytetradecanoate + oxidized [NADPH--hemoprotein reductase] + H2O + H(+). The catalysed reaction is dodecan-1-ol + reduced [NADPH--hemoprotein reductase] + O2 = 1,5-dodecanediol + oxidized [NADPH--hemoprotein reductase] + H2O + H(+). It carries out the reaction dodecan-1-ol + reduced [NADPH--hemoprotein reductase] + O2 = 1,4-dodecanediol + oxidized [NADPH--hemoprotein reductase] + H2O + H(+). It catalyses the reaction dodecan-1-ol + reduced [NADPH--hemoprotein reductase] + O2 = 1,6-dodecanediol + oxidized [NADPH--hemoprotein reductase] + H2O + H(+). Self-sufficient cytochrome P450 monooxygenase that catalyzes the regioselective in-chain hydroxylation of alkanes, fatty alcohols, and fatty acids at the omega-7 position. Performs hydroxylation of C10-C16 n-alkanes and C12 and C14 fatty alcohols; and thereby enables the one step biocatalytic synthesis of rare alcohols such as 5-dodecanol and 7-tetradecanol. Converts 1-dodecanol into 1,5-dodecanediol as major product with very little sub-terminally hydroxylated products with the 1,4-dodecanediol and 1,6-dodecanediol more abundant. Converts dodecanoic acid to 5-hydroxydodecanoic acid which can be further converted into delta-dodecalactone by lactonization of the 5-hydroxy acid at low pH. Also gives sub-terminal hydroxylation of dodecanoic acid with 9-hydroxydodecanoic acid being the second most abundant product. This Penicillium expansum (Blue mold rot fungus) protein is Self-sufficient cytochrome P450 monooxygenase CYP505E4.